Here is a 305-residue protein sequence, read N- to C-terminus: tRNA dimethylallyltransferase (305 aa).

9–16 (GPTAVGKT) is a binding site for ATP. 11 to 16 (TAVGKT) contacts substrate. The interval 34 to 37 (DSRQ) is interaction with substrate tRNA.

The protein belongs to the IPP transferase family. In terms of assembly, monomer. Mg(2+) is required as a cofactor.

It catalyses the reaction adenosine(37) in tRNA + dimethylallyl diphosphate = N(6)-dimethylallyladenosine(37) in tRNA + diphosphate. Its function is as follows. Catalyzes the transfer of a dimethylallyl group onto the adenine at position 37 in tRNAs that read codons beginning with uridine, leading to the formation of N6-(dimethylallyl)adenosine (i(6)A). In Roseiflexus sp. (strain RS-1), this protein is tRNA dimethylallyltransferase.